The primary structure comprises 722 residues: 1,4-alpha-glucan branching enzyme GlgB (722 aa).

Catalysis depends on Asp401, which acts as the Nucleophile. The active-site Proton donor is Glu454.

The protein belongs to the glycosyl hydrolase 13 family. GlgB subfamily. Monomer.

The enzyme catalyses Transfers a segment of a (1-&gt;4)-alpha-D-glucan chain to a primary hydroxy group in a similar glucan chain.. The protein operates within glycan biosynthesis; glycogen biosynthesis. Functionally, catalyzes the formation of the alpha-1,6-glucosidic linkages in glycogen by scission of a 1,4-alpha-linked oligosaccharide from growing alpha-1,4-glucan chains and the subsequent attachment of the oligosaccharide to the alpha-1,6 position. The polypeptide is 1,4-alpha-glucan branching enzyme GlgB (Rubrobacter xylanophilus (strain DSM 9941 / JCM 11954 / NBRC 16129 / PRD-1)).